The primary structure comprises 469 residues: Serine/threonine-protein kinase orb6 (469 aa).

A Protein kinase domain is found at 93 to 392 (FSTIKVIGKG…AIEIMQHPFF (300 aa)). ATP contacts are provided by residues 99–107 (IGKGAFGEV) and K122. D216 functions as the Proton acceptor in the catalytic mechanism. Residues 393-467 (TGIDWDHIRE…KKFNYLTMKG (75 aa)) form the AGC-kinase C-terminal domain.

It belongs to the protein kinase superfamily. Ser/Thr protein kinase family. In terms of assembly, interacts with mob2.

The catalysed reaction is L-seryl-[protein] + ATP = O-phospho-L-seryl-[protein] + ADP + H(+). The enzyme catalyses L-threonyl-[protein] + ATP = O-phospho-L-threonyl-[protein] + ADP + H(+). Interacts with pak1/shk1 and coordinates cell morphogenesis with the cell cycle. It is essential for maintenance of cell polarity and is involved in mitotic control. This is Serine/threonine-protein kinase orb6 (orb6) from Schizosaccharomyces pombe (strain 972 / ATCC 24843) (Fission yeast).